Here is a 63-residue protein sequence, read N- to C-terminus: Large ribosomal subunit protein bL35 (63 aa).

The tract at residues M1–K22 is disordered.

The protein belongs to the bacterial ribosomal protein bL35 family.

In Marinobacter nauticus (strain ATCC 700491 / DSM 11845 / VT8) (Marinobacter aquaeolei), this protein is Large ribosomal subunit protein bL35.